The chain runs to 240 residues: 4-hydroxy-tetrahydrodipicolinate reductase (240 aa).

NAD(+) is bound by residues 79–81 (ATT) and 103–106 (SANM). Residue H135 is the Proton donor/acceptor of the active site. Residue H136 coordinates (S)-2,3,4,5-tetrahydrodipicolinate. K139 functions as the Proton donor in the catalytic mechanism. 145 to 146 (GT) is a (S)-2,3,4,5-tetrahydrodipicolinate binding site.

This sequence belongs to the DapB family.

The protein resides in the cytoplasm. The enzyme catalyses (S)-2,3,4,5-tetrahydrodipicolinate + NAD(+) + H2O = (2S,4S)-4-hydroxy-2,3,4,5-tetrahydrodipicolinate + NADH + H(+). It carries out the reaction (S)-2,3,4,5-tetrahydrodipicolinate + NADP(+) + H2O = (2S,4S)-4-hydroxy-2,3,4,5-tetrahydrodipicolinate + NADPH + H(+). It functions in the pathway amino-acid biosynthesis; L-lysine biosynthesis via DAP pathway; (S)-tetrahydrodipicolinate from L-aspartate: step 4/4. In terms of biological role, catalyzes the conversion of 4-hydroxy-tetrahydrodipicolinate (HTPA) to tetrahydrodipicolinate. The protein is 4-hydroxy-tetrahydrodipicolinate reductase of Staphylococcus aureus (strain MRSA252).